The sequence spans 350 residues: Phosphoribosylformylglycinamidine cyclo-ligase (350 aa).

This sequence belongs to the AIR synthase family.

The protein resides in the cytoplasm. It carries out the reaction 2-formamido-N(1)-(5-O-phospho-beta-D-ribosyl)acetamidine + ATP = 5-amino-1-(5-phospho-beta-D-ribosyl)imidazole + ADP + phosphate + H(+). It participates in purine metabolism; IMP biosynthesis via de novo pathway; 5-amino-1-(5-phospho-D-ribosyl)imidazole from N(2)-formyl-N(1)-(5-phospho-D-ribosyl)glycinamide: step 2/2. This is Phosphoribosylformylglycinamidine cyclo-ligase from Pseudoalteromonas translucida (strain TAC 125).